The sequence spans 162 residues: Endoribonuclease YbeY (162 aa).

His128, His132, and His138 together coordinate Zn(2+).

This sequence belongs to the endoribonuclease YbeY family. Zn(2+) serves as cofactor.

The protein resides in the cytoplasm. Functionally, single strand-specific metallo-endoribonuclease involved in late-stage 70S ribosome quality control and in maturation of the 3' terminus of the 16S rRNA. This Lactococcus lactis subsp. cremoris (strain SK11) protein is Endoribonuclease YbeY.